Reading from the N-terminus, the 237-residue chain is Ribosomal RNA small subunit methyltransferase G (237 aa).

Residues Gly78, Phe83, 129–130 (AE), and Arg148 contribute to the S-adenosyl-L-methionine site. The disordered stretch occupies residues 218–237 (KKETPRKYPRKAGTPNKKPL).

The protein belongs to the methyltransferase superfamily. RNA methyltransferase RsmG family.

Its subcellular location is the cytoplasm. Its function is as follows. Specifically methylates the N7 position of a guanine in 16S rRNA. The polypeptide is Ribosomal RNA small subunit methyltransferase G (Streptococcus uberis (strain ATCC BAA-854 / 0140J)).